The chain runs to 90 residues: DNA-binding protein HU-1 (90 aa).

At T4 the chain carries Phosphothreonine.

The protein belongs to the bacterial histone-like protein family. As to quaternary structure, homodimer.

Its function is as follows. Histone-like DNA-binding protein which is capable of wrapping DNA to stabilize it, and thus to prevent its denaturation under extreme environmental conditions. In Halalkalibacterium halodurans (strain ATCC BAA-125 / DSM 18197 / FERM 7344 / JCM 9153 / C-125) (Bacillus halodurans), this protein is DNA-binding protein HU-1 (hup2).